The sequence spans 98 residues: UPF0473 protein lp_2273 (98 aa).

Belongs to the UPF0473 family.

This Lactiplantibacillus plantarum (strain ATCC BAA-793 / NCIMB 8826 / WCFS1) (Lactobacillus plantarum) protein is UPF0473 protein lp_2273.